We begin with the raw amino-acid sequence, 220 residues long: Tegument protein UL51 homolog (220 aa).

The S-palmitoyl cysteine; by host moiety is linked to residue cysteine 11.

The protein belongs to the herpesviridae UL51 family. Oligomerizes. Interacts with UL7 homolog; this interaction mediates UL7 homolog incorporation to virions. Phosphorylated. In terms of processing, palmitoylation is necessary for Golgi localization.

It is found in the virion tegument. Its subcellular location is the host cytoplasm. The protein resides in the host Golgi apparatus. Functionally, plays several roles during the time course of infection, including egress of virus particles from the perinuclear space and secondary envelopment of cytoplasmic capsids that bud into specific trans-Golgi network (TGN)-derived membranes. This is Tegument protein UL51 homolog (55) from Connochaetes taurinus (Blue wildebeest).